The following is a 315-amino-acid chain: Ornithine carbamoyltransferase (315 aa).

Residues S53–T56, Q80, R104, and H131–Q134 each bind carbamoyl phosphate. Residues N163, D227, and S231 to M232 each bind L-ornithine. Residues C267–L268 and R295 contribute to the carbamoyl phosphate site.

This sequence belongs to the aspartate/ornithine carbamoyltransferase superfamily. OTCase family.

The protein resides in the cytoplasm. It carries out the reaction carbamoyl phosphate + L-ornithine = L-citrulline + phosphate + H(+). The protein operates within amino-acid biosynthesis; L-arginine biosynthesis; L-arginine from L-ornithine and carbamoyl phosphate: step 1/3. Reversibly catalyzes the transfer of the carbamoyl group from carbamoyl phosphate (CP) to the N(epsilon) atom of ornithine (ORN) to produce L-citrulline. In Rhodococcus jostii (strain RHA1), this protein is Ornithine carbamoyltransferase.